The sequence spans 310 residues: Protease HtpX homolog (310 aa).

Helical transmembrane passes span 7 to 27 (SVMLLTAMTAFLLIVGQLIGG) and 29 to 49 (AGMTFALIMAVGMNFFSYWYS). Position 131 (H131) interacts with Zn(2+). E132 is a catalytic residue. H135 contacts Zn(2+). Helical transmembrane passes span 141–161 (ILIGTIAATMAGAVMFLASMA) and 178–198 (PLGFAGMLIMAILAPIGAALI). Zn(2+) is bound at residue E207. Residues 277-310 (LTGARPQSGGAPSGPERTARNAEDSAKDFWDSLK) are disordered. Residues 293 to 310 (RTARNAEDSAKDFWDSLK) show a composition bias toward basic and acidic residues.

Belongs to the peptidase M48B family. Zn(2+) is required as a cofactor.

The protein localises to the cell inner membrane. This Desulfatibacillum aliphaticivorans protein is Protease HtpX homolog.